Consider the following 772-residue polypeptide: General transcription and DNA repair factor IIH helicase subunit XPD (772 aa).

The 277-residue stretch at 7 to 283 (DLPILFPYPR…QSDSKKLQDE (277 aa)) folds into the Helicase ATP-binding domain. 42 to 49 (MPSGTGKT) is a binding site for ATP. 4 residues coordinate [4Fe-4S] cluster: Cys-115, Cys-133, Cys-154, and Cys-189. The DEAH box signature appears at 233-236 (DEAH).

The protein belongs to the helicase family. RAD3/XPD subfamily. As to quaternary structure, component of the 7-subunit TFIIH core complex composed of XPB/ptr8, XPD/rad15, ssl1, tfb1, tfb2, tfb4 and tfb5, which is active in NER. The core complex associates with the 3-subunit CTD-kinase module TFIIK composed of mcs2/cyclin H, mcs6/cdk7 and pmh1/tfb3 to form the 10-subunit holoenzyme (holo-TFIIH) active in transcription. It depends on [4Fe-4S] cluster as a cofactor.

The protein resides in the nucleus. It catalyses the reaction Couples ATP hydrolysis with the unwinding of duplex DNA at the replication fork by translocating in the 5'-3' direction. This creates two antiparallel DNA single strands (ssDNA). The leading ssDNA polymer is the template for DNA polymerase III holoenzyme which synthesizes a continuous strand.. The enzyme catalyses ATP + H2O = ADP + phosphate + H(+). ATP-dependent 5'-3' DNA helicase, component of the general transcription and DNA repair factor IIH (TFIIH) core complex, which is involved in general and transcription-coupled nucleotide excision repair (NER) of damaged DNA and, when complexed to TFIIK, in RNA transcription by RNA polymerase II. In NER, TFIIH acts by opening DNA around the lesion to allow the excision of the damaged oligonucleotide and its replacement by a new DNA fragment. The ATP-dependent helicase activity of XPD/rad15 is required for DNA opening. In transcription, TFIIH has an essential role in transcription initiation. When the pre-initiation complex (PIC) has been established, TFIIH is required for promoter opening and promoter escape. Phosphorylation of the C-terminal tail (CTD) of the largest subunit of RNA polymerase II by the kinase module TFIIK controls the initiation of transcription. XPD/rad15 acts by forming a bridge between TFIIK and the core-TFIIH complex. Involved in the maintenance of the fidelity of DNA replication. The polypeptide is General transcription and DNA repair factor IIH helicase subunit XPD (Schizosaccharomyces pombe (strain 972 / ATCC 24843) (Fission yeast)).